Here is a 526-residue protein sequence, read N- to C-terminus: Putative NipSnap protein K02D10.1 (526 aa).

This sequence belongs to the NipSnap family.

The polypeptide is Putative NipSnap protein K02D10.1 (Caenorhabditis elegans).